The following is a 62-amino-acid chain: Large ribosomal subunit protein bL28 (62 aa).

Belongs to the bacterial ribosomal protein bL28 family.

In Phytoplasma mali (strain AT), this protein is Large ribosomal subunit protein bL28.